Here is a 108-residue protein sequence, read N- to C-terminus: uncharacterized protein (108 aa).

Composition is skewed to basic and acidic residues over residues 1–15 and 53–69; these read MSEAKDNGSRDEVLV and KLKDRESHQENEDRNSE. Residues 1-77 form a disordered region; the sequence is MSEAKDNGSR…SELDQDEEDK (77 aa).

This is an uncharacterized protein from Homo sapiens (Human).